Consider the following 124-residue polypeptide: TP53-target gene 3 protein (124 aa).

Positions 1 to 11 (MRASPCISQPA) are enriched in polar residues. The tract at residues 1–42 (MRASPCISQPAASWHPRPSALRPTAGSGPDTRTPGTVEDGSA) is disordered.

As to expression, strongly expressed in testis. Weakly expressed in heart, placenta and skeletal muscle.

It localises to the cytoplasm. It is found in the nucleus. Functionally, may play a significant role in p53/TP53-mediating signaling pathway. This Homo sapiens (Human) protein is TP53-target gene 3 protein.